Reading from the N-terminus, the 420-residue chain is Pre-mRNA-splicing factor RBM22 (420 aa).

Ala2 carries the N-acetylalanine modification. Residues Ser4 and Ser102 each carry the phosphoserine modification. Residues Lys139 and Lys149 each participate in a glycyl lysine isopeptide (Lys-Gly) (interchain with G-Cter in SUMO2) cross-link. Residues 159-186 (RNRPHICSFWVKGECKRGEECPYRHEKP) form a C3H1-type zinc finger. Lys212 carries the post-translational modification N6-acetyllysine. The RRM domain occupies 232 to 305 (TTLYVGGLGD…RRLNVKWGRS (74 aa)). Lys290 is covalently cross-linked (Glycyl lysine isopeptide (Lys-Gly) (interchain with G-Cter in SUMO2)). Disordered stretches follow at residues 303-343 (GRSQ…AAEE) and 371-420 (IAPP…HSSP). Residues 309–318 (RGKEKEKDGT) show a composition bias toward basic and acidic residues.

Belongs to the SLT11 family. Component of the pre-catalytic and catalytic spliceosome complexes. Component of the postcatalytic spliceosome P complex. Interacts with PDCD6; the interaction induces translocation of PDCD6 in the cytoplasm. Interacts with PPIL1.

It localises to the nucleus. Its subcellular location is the cytoplasm. In terms of biological role, required for pre-mRNA splicing as component of the activated spliceosome. Involved in the first step of pre-mRNA splicing. Binds directly to the internal stem-loop (ISL) domain of the U6 snRNA and to the pre-mRNA intron near the 5' splice site during the activation and catalytic phases of the spliceosome cycle. Involved in both translocations of the nuclear SLU7 to the cytoplasm and the cytosolic calcium-binding protein PDCD6 to the nucleus upon cellular stress responses. This Rattus norvegicus (Rat) protein is Pre-mRNA-splicing factor RBM22 (Rbm22).